Consider the following 557-residue polypeptide: Tryptophan 2-monooxygenase (557 aa).

Residues S49, E69, R71, R77, and R98 each contribute to the FMN site. R98 is a binding site for substrate.

Belongs to the tryptophan 2-monooxygenase family. As to quaternary structure, monomer. Requires FMN as cofactor.

The catalysed reaction is L-tryptophan + O2 = indole-3-acetamide + CO2 + H2O. Its pathway is plant hormone metabolism; auxin biosynthesis. The chain is Tryptophan 2-monooxygenase (iaaM) from Pseudomonas savastanoi (Pseudomonas syringae pv. savastanoi).